The sequence spans 374 residues: Queuine tRNA-ribosyltransferase (374 aa).

The Proton acceptor role is filled by aspartate 89. Residues 89 to 93, aspartate 143, glutamine 187, and glycine 214 contribute to the substrate site; that span reads DSGGF. The interval 245–251 is RNA binding; the sequence is GVGKPED. The Nucleophile role is filled by aspartate 264. Residues 269-273 are RNA binding; important for wobble base 34 recognition; sequence TRNAR. 4 residues coordinate Zn(2+): cysteine 302, cysteine 304, cysteine 307, and histidine 333.

It belongs to the queuine tRNA-ribosyltransferase family. Homodimer. Within each dimer, one monomer is responsible for RNA recognition and catalysis, while the other monomer binds to the replacement base PreQ1. It depends on Zn(2+) as a cofactor.

It carries out the reaction 7-aminomethyl-7-carbaguanine + guanosine(34) in tRNA = 7-aminomethyl-7-carbaguanosine(34) in tRNA + guanine. Its pathway is tRNA modification; tRNA-queuosine biosynthesis. Its function is as follows. Catalyzes the base-exchange of a guanine (G) residue with the queuine precursor 7-aminomethyl-7-deazaguanine (PreQ1) at position 34 (anticodon wobble position) in tRNAs with GU(N) anticodons (tRNA-Asp, -Asn, -His and -Tyr). Catalysis occurs through a double-displacement mechanism. The nucleophile active site attacks the C1' of nucleotide 34 to detach the guanine base from the RNA, forming a covalent enzyme-RNA intermediate. The proton acceptor active site deprotonates the incoming PreQ1, allowing a nucleophilic attack on the C1' of the ribose to form the product. After dissociation, two additional enzymatic reactions on the tRNA convert PreQ1 to queuine (Q), resulting in the hypermodified nucleoside queuosine (7-(((4,5-cis-dihydroxy-2-cyclopenten-1-yl)amino)methyl)-7-deazaguanosine). This Shewanella baltica (strain OS185) protein is Queuine tRNA-ribosyltransferase.